Reading from the N-terminus, the 213-residue chain is Outer-membrane lipoprotein carrier protein (213 aa).

The first 23 residues, 1-23 (MKKLLKQSLLGFALVSMTGAAFA), serve as a signal peptide directing secretion.

It belongs to the LolA family. Monomer.

Its subcellular location is the periplasm. Its function is as follows. Participates in the translocation of lipoproteins from the inner membrane to the outer membrane. Only forms a complex with a lipoprotein if the residue after the N-terminal Cys is not an aspartate (The Asp acts as a targeting signal to indicate that the lipoprotein should stay in the inner membrane). The polypeptide is Outer-membrane lipoprotein carrier protein (Actinobacillus pleuropneumoniae serotype 7 (strain AP76)).